The following is a 136-amino-acid chain: Salivary protein 15 Iric-2 (136 aa).

The signal sequence occupies residues 1-22; it reads MESFVAMKVVCIVLLFVIAAEA. Residue Asn-105 is glycosylated (N-linked (GlcNAc...) asparagine). The CD4-binding stretch occupies residues 117–136; sequence GPKNQTCENKDQCVPHIPGC.

This sequence belongs to the salp15 family. In terms of assembly, interacts with host CD4. Interacts with host DC-SIGN (CD209). Interacts with Borrelia outer surface protein C (OspC). Expressed in salivary glands. Detected in fed adult female.

Its subcellular location is the secreted. Salivary tick protein that downregulates host immune system by binding to both dendritic cells, and CD4(+) T cells. Specifically binds to the CD4 coreceptor on T cells. This interaction prevents the activation of the Src kinase, Lck, and its downstream substrate Zap-70, and results in deficient activation of PLCgamma1, the repression of calcium fluxes triggered by T-cell antigen receptor (TCR) ligation, and a subsequent reduction in interleukin-2 production. This salivary protein also binds to DC-SIGN (CD209) on dendritic cells (DC) and activates the Raf-1 kinase/MEK signaling pathway that results in down-regulating expression of pro-inflammatory cytokines. Furthermore, it inhibits T cell proliferation induced by DCs. In addition, it inhibits in vitro keratinocyte inflammation induced by Borrelia burgdorferi or by the major outer surface protein (OspC) of Borrelia. In addition, it downregulates chemokines and monocyte chemoattractant protein 1, as well as several antimicrobial peptides such as defensins, cathelicidin, psoriasin, and RNase 7. Apart from its immunomodulatory activities, it is also associated with protection of Borrelia spirochetes from antibody-mediated killing through its binding to OspC. In vivo, tests on different immune disease animal models show promising therapeutic results, e.g., in inhibiting HIV infection, experimental autoimmune encephalomyelitis, transplantation rejection, and asthma. The chain is Salivary protein 15 Iric-2 from Ixodes ricinus (Common tick).